The sequence spans 852 residues: Leucine--tRNA ligase (852 aa).

The 'HIGH' region motif lies at 41-51 (PYPSGRIHIGH). The short motif at 623 to 627 (KMSKS) is the 'KMSKS' region element. Position 626 (Lys626) interacts with ATP.

It belongs to the class-I aminoacyl-tRNA synthetase family.

Its subcellular location is the cytoplasm. It catalyses the reaction tRNA(Leu) + L-leucine + ATP = L-leucyl-tRNA(Leu) + AMP + diphosphate. The polypeptide is Leucine--tRNA ligase (Ruegeria pomeroyi (strain ATCC 700808 / DSM 15171 / DSS-3) (Silicibacter pomeroyi)).